The primary structure comprises 293 residues: Small ribosomal subunit biogenesis GTPase RsgA (293 aa).

Positions 63 to 223 (KNWLVRPPIA…VADTPGFSAL (161 aa)) constitute a CP-type G domain. Residues 112–115 (NKMD) and 166–174 (GQSGVGKSS) each bind GTP. Cys247, Cys252, His254, and Cys260 together coordinate Zn(2+).

This sequence belongs to the TRAFAC class YlqF/YawG GTPase family. RsgA subfamily. In terms of assembly, monomer. Associates with 30S ribosomal subunit, binds 16S rRNA. It depends on Zn(2+) as a cofactor.

It localises to the cytoplasm. Its function is as follows. One of several proteins that assist in the late maturation steps of the functional core of the 30S ribosomal subunit. Helps release RbfA from mature subunits. May play a role in the assembly of ribosomal proteins into the subunit. Circularly permuted GTPase that catalyzes slow GTP hydrolysis, GTPase activity is stimulated by the 30S ribosomal subunit. This Geobacillus sp. (strain WCH70) protein is Small ribosomal subunit biogenesis GTPase RsgA.